The chain runs to 512 residues: Phosphoenolpyruvate carboxylase (512 aa).

This sequence belongs to the PEPCase type 2 family. As to quaternary structure, homotetramer. Mg(2+) is required as a cofactor.

It catalyses the reaction oxaloacetate + phosphate = phosphoenolpyruvate + hydrogencarbonate. Catalyzes the irreversible beta-carboxylation of phosphoenolpyruvate (PEP) to form oxaloacetate (OAA), a four-carbon dicarboxylic acid source for the tricarboxylic acid cycle. In Caldivirga maquilingensis (strain ATCC 700844 / DSM 13496 / JCM 10307 / IC-167), this protein is Phosphoenolpyruvate carboxylase.